Consider the following 164-residue polypeptide: Protein-export protein SecB (164 aa).

Belongs to the SecB family. Homotetramer, a dimer of dimers. One homotetramer interacts with 1 SecA dimer.

It is found in the cytoplasm. One of the proteins required for the normal export of preproteins out of the cell cytoplasm. It is a molecular chaperone that binds to a subset of precursor proteins, maintaining them in a translocation-competent state. It also specifically binds to its receptor SecA. The chain is Protein-export protein SecB from Shewanella denitrificans (strain OS217 / ATCC BAA-1090 / DSM 15013).